Consider the following 478-residue polypeptide: Serine carboxypeptidase-like 33 (478 aa).

The N-terminal stretch at 1–33 (MNLTLPMKKQKFLLIISLLILLSLLHQDYHIEA) is a signal peptide. Cystine bridges form between Cys-95–Cys-361, Cys-257–Cys-268, and Cys-292–Cys-330. Residues Asn-114 and Asn-146 are each glycosylated (N-linked (GlcNAc...) asparagine). Ser-188 is a catalytic residue. 3 N-linked (GlcNAc...) asparagine glycosylation sites follow: Asn-263, Asn-295, and Asn-362. Residues Asp-398 and His-451 contribute to the active site.

This sequence belongs to the peptidase S10 family. Expressed in senescent leaves and flowers.

The protein resides in the secreted. Probable carboxypeptidase. This is Serine carboxypeptidase-like 33 (SCPL33) from Arabidopsis thaliana (Mouse-ear cress).